The following is a 510-amino-acid chain: ATP synthase subunit alpha (510 aa).

An ATP-binding site is contributed by 169–176 (GDRQTGKT).

The protein belongs to the ATPase alpha/beta chains family. As to quaternary structure, F-type ATPases have 2 components, CF(1) - the catalytic core - and CF(0) - the membrane proton channel. CF(1) has five subunits: alpha(3), beta(3), gamma(1), delta(1), epsilon(1). CF(0) has three main subunits: a(1), b(2) and c(9-12). The alpha and beta chains form an alternating ring which encloses part of the gamma chain. CF(1) is attached to CF(0) by a central stalk formed by the gamma and epsilon chains, while a peripheral stalk is formed by the delta and b chains.

The protein resides in the cell membrane. It carries out the reaction ATP + H2O + 4 H(+)(in) = ADP + phosphate + 5 H(+)(out). Its function is as follows. Produces ATP from ADP in the presence of a proton gradient across the membrane. The alpha chain is a regulatory subunit. In Buchnera aphidicola subsp. Schizaphis graminum (strain Sg), this protein is ATP synthase subunit alpha.